Reading from the N-terminus, the 94-residue chain is Large ribosomal subunit protein bL27 (94 aa).

Positions 1–9 (MNLANLQLF) are excised as a propeptide. Residues 11–34 (HKKGGGSTSNGRDSQAKRLGAKAA) form a disordered region.

The protein belongs to the bacterial ribosomal protein bL27 family. Post-translationally, the N-terminus is cleaved by ribosomal processing cysteine protease Prp.

In Streptococcus pyogenes serotype M3 (strain ATCC BAA-595 / MGAS315), this protein is Large ribosomal subunit protein bL27.